A 443-amino-acid polypeptide reads, in one-letter code: F-box only protein 39 (443 aa).

One can recognise an F-box domain in the interval 16-61 (WATLPDVCLRRVFWWLGDRDRSRAALVCRKWNQMMYSADLWRYRTI).

As to quaternary structure, directly interacts with SKP1 and CUL1.

Functionally, substrate-recognition component of the SCF (SKP1-CUL1-F-box protein)-type E3 ubiquitin ligase complex. The chain is F-box only protein 39 (FBXO39) from Bos taurus (Bovine).